The following is a 327-amino-acid chain: Malate dehydrogenase (327 aa).

Position 11–17 (11–17 (GAAGQIG)) interacts with NAD(+). Substrate contacts are provided by R92 and R98. NAD(+) contacts are provided by residues N105, Q112, and 129 to 131 (VGN). Substrate is bound by residues N131 and R162. H187 acts as the Proton acceptor in catalysis.

It belongs to the LDH/MDH superfamily. MDH type 2 family.

The enzyme catalyses (S)-malate + NAD(+) = oxaloacetate + NADH + H(+). In terms of biological role, catalyzes the reversible oxidation of malate to oxaloacetate. The chain is Malate dehydrogenase from Leptospira biflexa serovar Patoc (strain Patoc 1 / Ames).